The following is a 311-amino-acid chain: Aspartate carbamoyltransferase catalytic subunit (311 aa).

Residues arginine 55 and threonine 56 each coordinate carbamoyl phosphate. An L-aspartate-binding site is contributed by lysine 85. Residues arginine 106, histidine 135, and glutamine 138 each contribute to the carbamoyl phosphate site. L-aspartate is bound by residues arginine 168 and arginine 230. Residues leucine 268 and proline 269 each contribute to the carbamoyl phosphate site.

This sequence belongs to the aspartate/ornithine carbamoyltransferase superfamily. ATCase family. Heterododecamer (2C3:3R2) of six catalytic PyrB chains organized as two trimers (C3), and six regulatory PyrI chains organized as three dimers (R2).

The catalysed reaction is carbamoyl phosphate + L-aspartate = N-carbamoyl-L-aspartate + phosphate + H(+). It functions in the pathway pyrimidine metabolism; UMP biosynthesis via de novo pathway; (S)-dihydroorotate from bicarbonate: step 2/3. Catalyzes the condensation of carbamoyl phosphate and aspartate to form carbamoyl aspartate and inorganic phosphate, the committed step in the de novo pyrimidine nucleotide biosynthesis pathway. The chain is Aspartate carbamoyltransferase catalytic subunit from Yersinia pestis.